A 311-amino-acid chain; its full sequence is 4-hydroxyproline 2-epimerase (311 aa).

The active-site Proton acceptor is Cys89. Substrate contacts are provided by residues 90–91, His209, and Asp233; that span reads GH. Cys237 serves as the catalytic Proton donor. A substrate-binding site is contributed by 238–239; that stretch reads GT.

The protein belongs to the proline racemase family.

It catalyses the reaction trans-4-hydroxy-L-proline = cis-4-hydroxy-D-proline. Its function is as follows. Catalyzes the epimerization of trans-4-hydroxy-L-proline (t4LHyp) to cis-4-hydroxy-D-proline (c4DHyp). Is likely involved in a degradation pathway that converts t4LHyp to alpha-ketoglutarate. Displays no proline racemase activity. The chain is 4-hydroxyproline 2-epimerase from Burkholderia ambifaria (strain ATCC BAA-244 / DSM 16087 / CCUG 44356 / LMG 19182 / AMMD) (Burkholderia cepacia (strain AMMD)).